The chain runs to 129 residues: uncharacterized protein (129 aa).

This is an uncharacterized protein from Methanocaldococcus jannaschii (strain ATCC 43067 / DSM 2661 / JAL-1 / JCM 10045 / NBRC 100440) (Methanococcus jannaschii).